A 462-amino-acid chain; its full sequence is Cysteine--tRNA ligase (462 aa).

Zn(2+) is bound at residue Cys29. Positions 31 to 41 (PTVYNHAHIGN) match the 'HIGH' region motif. 3 residues coordinate Zn(2+): Cys211, His236, and Glu240. Residues 269–273 (KMSKS) carry the 'KMSKS' region motif. Residue Lys272 coordinates ATP.

Belongs to the class-I aminoacyl-tRNA synthetase family. Monomer. Zn(2+) serves as cofactor.

It localises to the cytoplasm. The catalysed reaction is tRNA(Cys) + L-cysteine + ATP = L-cysteinyl-tRNA(Cys) + AMP + diphosphate. The sequence is that of Cysteine--tRNA ligase from Caulobacter sp. (strain K31).